The following is a 193-amino-acid chain: 3-isopropylmalate dehydratase small subunit (193 aa).

Belongs to the LeuD family. LeuD type 1 subfamily. Heterodimer of LeuC and LeuD.

The enzyme catalyses (2R,3S)-3-isopropylmalate = (2S)-2-isopropylmalate. It functions in the pathway amino-acid biosynthesis; L-leucine biosynthesis; L-leucine from 3-methyl-2-oxobutanoate: step 2/4. Functionally, catalyzes the isomerization between 2-isopropylmalate and 3-isopropylmalate, via the formation of 2-isopropylmaleate. In Bacillus cereus (strain ATCC 10987 / NRS 248), this protein is 3-isopropylmalate dehydratase small subunit.